The sequence spans 335 residues: Terpene synthase 4 (335 aa).

Positions 103 to 108 match the DDxx(x)D/E motif motif; the sequence is DDYIFE. Residues 243–251 carry the NDxxSxxxD/E motif motif; the sequence is NDLYSFNRE.

The protein belongs to the terpene synthase family.

The catalysed reaction is (2E,6E)-farnesyl diphosphate + H2O = (6E)-nerolidol + diphosphate. In terms of biological role, terpene synthase that converts its substrate farnesyl diphosphate (FPP) into the sesquiterpene (E)-nerolidol. The polypeptide is Terpene synthase 4 (Dictyostelium discoideum (Social amoeba)).